Here is a 208-residue protein sequence, read N- to C-terminus: Thymidylate kinase (208 aa).

Residue 7–14 coordinates ATP; it reads GIDGAGKT.

Belongs to the thymidylate kinase family.

The enzyme catalyses dTMP + ATP = dTDP + ADP. Phosphorylation of dTMP to form dTDP in both de novo and salvage pathways of dTTP synthesis. The sequence is that of Thymidylate kinase from Xylella fastidiosa (strain Temecula1 / ATCC 700964).